The sequence spans 60 residues: Small, acid-soluble spore protein 1 (60 aa).

It belongs to the alpha/beta-type SASP family. Post-translationally, SASP are degraded in the first minutes of spore germination and provide amino acids for both new protein synthesis and metabolism.

Its function is as follows. SASP are bound to spore DNA. They are double-stranded DNA-binding proteins that cause DNA to change to an a-like conformation. They protect the DNA backbone from chemical and enzymatic cleavage and are thus involved in dormant spore's high resistance to UV light. In Clostridium perfringens (strain 13 / Type A), this protein is Small, acid-soluble spore protein 1 (ssp1).